The primary structure comprises 692 residues: Potassium-transporting ATPase ATP-binding subunit (692 aa).

The next 4 helical transmembrane spans lie at 50–70 (PIMF…FLPS), 77–97 (GWFN…ANFA), 240–260 (LTLI…YLGF), and 266–286 (VLVA…LSAI). Catalysis depends on aspartate 319, which acts as the 4-aspartylphosphate intermediate. ATP-binding positions include aspartate 356, glutamate 360, 388 to 395 (FKAETRMS), and lysine 407. Mg(2+) is bound by residues aspartate 530 and aspartate 534. 3 helical membrane-spanning segments follow: residues 600 to 620 (FAII…LNIM), 628 to 648 (AILS…PLAM), and 672 to 692 (GGVI…GLFI).

It belongs to the cation transport ATPase (P-type) (TC 3.A.3) family. Type IA subfamily. The system is composed of three essential subunits: KdpA, KdpB and KdpC.

Its subcellular location is the cell membrane. It carries out the reaction K(+)(out) + ATP + H2O = K(+)(in) + ADP + phosphate + H(+). In terms of biological role, part of the high-affinity ATP-driven potassium transport (or Kdp) system, which catalyzes the hydrolysis of ATP coupled with the electrogenic transport of potassium into the cytoplasm. This subunit is responsible for energy coupling to the transport system and for the release of the potassium ions to the cytoplasm. This Bacillus cereus (strain 03BB102) protein is Potassium-transporting ATPase ATP-binding subunit.